The primary structure comprises 423 residues: Structure-specific endonuclease subunit SLX1 (423 aa).

The GIY-YIG domain maps to 23-105 (AFYCCYLLRS…QNTKVSRHAD (83 aa)). 2 disordered regions span residues 300 to 334 (RRRR…DALQ) and 365 to 406 (AHRP…LGLQ).

The protein belongs to the SLX1 family. Forms a heterodimer with SLX4. A divalent metal cation is required as a cofactor.

The protein localises to the nucleus. Functionally, catalytic subunit of the SLX1-SLX4 structure-specific endonuclease that resolves DNA secondary structures generated during DNA repair and recombination. Has endonuclease activity towards branched DNA substrates, introducing single-strand cuts in duplex DNA close to junctions with ss-DNA. This is Structure-specific endonuclease subunit SLX1 from Paracoccidioides brasiliensis (strain Pb03).